We begin with the raw amino-acid sequence, 349 residues long: UDP-N-acetylenolpyruvoylglucosamine reductase (349 aa).

An FAD-binding PCMH-type domain is found at 25 to 197 (GIDARARYAA…VSVTFRLPKR (173 aa)). Arg-173 is a catalytic residue. The active-site Proton donor is the Ser-249. Glu-345 is an active-site residue.

Belongs to the MurB family. The cofactor is FAD.

It is found in the cytoplasm. The catalysed reaction is UDP-N-acetyl-alpha-D-muramate + NADP(+) = UDP-N-acetyl-3-O-(1-carboxyvinyl)-alpha-D-glucosamine + NADPH + H(+). It functions in the pathway cell wall biogenesis; peptidoglycan biosynthesis. Functionally, cell wall formation. This Burkholderia multivorans (strain ATCC 17616 / 249) protein is UDP-N-acetylenolpyruvoylglucosamine reductase.